A 138-amino-acid polypeptide reads, in one-letter code: Basic phospholipase A2 ammodytoxin B (138 aa).

A signal peptide spans 1–16 (MRTLWIVAVCLIGVEG). Intrachain disulfides connect C42-C131, C44-C60, C59-C111, C65-C138, C66-C104, C73-C97, and C91-C102. 3 residues coordinate Ca(2+): Y43, G45, and G47. Residue H63 is part of the active site. Residue D64 coordinates Ca(2+). D105 is an active-site residue.

The protein belongs to the phospholipase A2 family. Group II subfamily. D49 sub-subfamily. In terms of assembly, monomer. Binds to calmodulin, coagulation factor X (F10), M-type PLA2 receptor (R-180), 14-3-3 proteins gamma (YWHAG) and epsilon (YWHAE), and R25, a mitochondrial membrane protein. It depends on Ca(2+) as a cofactor. As to expression, expressed by the venom gland.

The protein resides in the secreted. It is found in the host cytoplasm. It localises to the host cytosol. The enzyme catalyses a 1,2-diacyl-sn-glycero-3-phosphocholine + H2O = a 1-acyl-sn-glycero-3-phosphocholine + a fatty acid + H(+). Snake venom phospholipase A2 (PLA2) that acts as a presynaptic neurotoxin, an inhibitor of blood coagulation, and has been found to bind with high affinity to intracellular proteins. The response of indirectly stimulated neuromuscular preparations to ammodytoxin (Atx) is triphasic. The first phase, the transient inhibition of the acetylcholine (ACh) release, starts soon after the addition of Atx and lasts for several minutes. This phase is probably independent of Atx enzymatic activity. The effect may be due to the specific binding of the toxin to presynaptic receptors. These receptors, called N-type receptors, are still unidentified. It is noteworthy that a neuronal isoform of the M-type PLA2 receptor (R180) has been identified as a high-affinity receptor for Atx in neuronal plasma membranes. It was demonstrated however that this receptor is not essential for expression of neurotoxicity by Atx. The second phase corresponds to an augmentation of neurotransmitter release. A peak is reached 10-20 minutes after exposure of the preparation to Atx and is followed by a gradual reduction. In this phase, the enzymatic activity of Atx of the mammalian is not significant. It is speculated that the increased release of neurotransmitter in this phase is induced by the interference of Atx with voltage-gated potassium channels. Measurements of ionic currents showed however that voltage-gated potassium channels are not affected by Atx. The third phase of the response of neuromuscular preparations to Atx, which corresponds to a complete and irreversible paralysis, is clearly dependent on the hydrolytic activity of the toxin. In addition to its presynaptic neurotoxicity, Atx shows an anticoagulant activity by binding with high affinity to activated coagulation factor X (F10) thus inhibiting the formation of the prothrombinase complex (FX/FV) and its activity (IC(50) is 82 nM). Surprisingly, Atx was discovered to bind intracellular proteins such as calmodulin (CaM), 14-3-3 proteins gamma (YWHAG) and epsilon (YWHAE) (by similarity with AtxC), as well as R25 (by similarity with AtxC), a mitochondrial integral membrane protein found in cerebral cortex. These findings raised a doubt about the dogma of the exclusively extracellular action of PLA2s, defended by the potential instability of these molecules in the reducing environment of the eukaryotic cytosol coupled with their possible inability to act as enzymes in this cellular compartment, due to too low concentration of calcium ions. This hypothesis was challenged efficiently by demonstrating the internalization of AtxA into a culture cells, but still remains to be directly demonstrated in vivo. PLA2 catalyzes the calcium-dependent hydrolysis of the 2-acyl groups in 3-sn-phosphoglycerides. The polypeptide is Basic phospholipase A2 ammodytoxin B (Vipera ammodytes ammodytes (Western sand viper)).